A 298-amino-acid polypeptide reads, in one-letter code: H-2 class I histocompatibility antigen, alpha chain (298 aa).

The Extracellular portion of the chain corresponds to 1 to 244 (RYEPRARWIE…EPPSSTKTNT (244 aa)). Asn-43 carries an N-linked (GlcNAc...) asparagine glycan. Cys-58 and Cys-121 form a disulfide bridge. N-linked (GlcNAc...) asparagine glycosylation occurs at Asn-133. The Ig-like C1-type domain occupies 142–230 (PKAHVTHHRR…EGLPEPLTLR (89 aa)). Residues Cys-160 and Cys-216 are joined by a disulfide bond. The chain crosses the membrane as a helical span at residues 245-265 (VIIAVPVVLGAVVILGAVMAF). Residues 266 to 298 (VMKRRRNTGGKGGDYALAPVSQSSDMSLPDCKV) are Cytoplasmic-facing. A disordered region spans residues 277-298 (GGDYALAPVSQSSDMSLPDCKV). Phosphoserine occurs at positions 289 and 292.

Belongs to the MHC class I family. In terms of assembly, heterodimer of an alpha chain and a beta chain (beta-2-microglobulin).

The protein resides in the membrane. Functionally, involved in the presentation of foreign antigens to the immune system. The protein is H-2 class I histocompatibility antigen, alpha chain (H2-D1) of Mus musculus (Mouse).